The sequence spans 285 residues: Transmembrane protein 53-B (285 aa).

A helical transmembrane segment spans residues 165–185; sequence FLALAAFAIMVIILRIVLYPV.

Belongs to the TMEM53 family.

Its subcellular location is the nucleus outer membrane. Ensures normal bone formation, through the negative regulation of bone morphogenetic protein (BMP) signaling in osteoblast lineage cells by blocking cytoplasm-nucleus translocation of phosphorylated SMAD proteins. The protein is Transmembrane protein 53-B (tmem53-b) of Xenopus laevis (African clawed frog).